A 353-amino-acid chain; its full sequence is MTIALGRVPKEENDLFDTMDDWLRRDRFVFVGWSGLLLFPCAYFALGGWFTGTTFVTSWYTHGLASSYLEGCNFLTAAVSTPANSLAHSLLLLWGPEAQGDFTRWCQLGGLWTFVALHGAFALIGFMLRQFELARSVQLRPYNAISFSGPIAVFVSVFLIYPLGQSGWFFAPSFGVAAIFRFILFFQGFHNWTLNPFHMMGVAGVLGAALLCAIHGATVENTLFEDGDGANTFRAFNPTQAEETYSMVTANRFWSQIFGVAFSNKRWLHFFMLFVPVTGLWMSAIGVVGLALNLRAYDFVSQEIRAAEDPEFETFYTKNILLNEGIRAWMAAQDQPHENLIFPEEVLPRGNAL.

Thr2 is subject to N-acetylthreonine. Thr2 carries the phosphothreonine modification. A helical transmembrane segment spans residues 41 to 61 (CAYFALGGWFTGTTFVTSWYT). His118 serves as a coordination point for chlorophyll a. The helical transmembrane segment at 125-141 (GFMLRQFELARSVQLRP) threads the bilayer. 2 residues coordinate pheophytin a: Gln130 and Asn143. A helical membrane pass occupies residues 153–166 (VFVSVFLIYPLGQS). His198 is a chlorophyll a binding site. The helical transmembrane segment at 208 to 228 (AALLCAIHGATVENTLFEDGD) threads the bilayer. A plastoquinone contacts are provided by His215 and Phe262. His215 contributes to the Fe cation binding site. Residue His269 participates in Fe cation binding. Residues 279–295 (GLWMSAIGVVGLALNLR) form a helical membrane-spanning segment.

It belongs to the reaction center PufL/M/PsbA/D family. As to quaternary structure, PSII is composed of 1 copy each of membrane proteins PsbA, PsbB, PsbC, PsbD, PsbE, PsbF, PsbH, PsbI, PsbJ, PsbK, PsbL, PsbM, PsbT, PsbX, PsbY, PsbZ, Psb30/Ycf12, at least 3 peripheral proteins of the oxygen-evolving complex and a large number of cofactors. It forms dimeric complexes. The D1/D2 heterodimer binds P680, chlorophylls that are the primary electron donor of PSII, and subsequent electron acceptors. It shares a non-heme iron and each subunit binds pheophytin, quinone, additional chlorophylls, carotenoids and lipids. There is also a Cl(-1) ion associated with D1 and D2, which is required for oxygen evolution. The PSII complex binds additional chlorophylls, carotenoids and specific lipids. serves as cofactor.

It is found in the plastid. The protein localises to the chloroplast thylakoid membrane. It carries out the reaction 2 a plastoquinone + 4 hnu + 2 H2O = 2 a plastoquinol + O2. In terms of biological role, photosystem II (PSII) is a light-driven water:plastoquinone oxidoreductase that uses light energy to abstract electrons from H(2)O, generating O(2) and a proton gradient subsequently used for ATP formation. It consists of a core antenna complex that captures photons, and an electron transfer chain that converts photonic excitation into a charge separation. The D1/D2 (PsbA/PsbD) reaction center heterodimer binds P680, the primary electron donor of PSII as well as several subsequent electron acceptors. D2 is needed for assembly of a stable PSII complex. The sequence is that of Photosystem II D2 protein from Agrostis stolonifera (Creeping bentgrass).